The chain runs to 122 residues: Small ribosomal subunit protein uS13 (122 aa).

Residues 99–122 are disordered; that stretch reads RGQRTHTNARTRKGPAKAIAGKKK.

Belongs to the universal ribosomal protein uS13 family. As to quaternary structure, part of the 30S ribosomal subunit. Forms a loose heterodimer with protein S19. Forms two bridges to the 50S subunit in the 70S ribosome.

Functionally, located at the top of the head of the 30S subunit, it contacts several helices of the 16S rRNA. In the 70S ribosome it contacts the 23S rRNA (bridge B1a) and protein L5 of the 50S subunit (bridge B1b), connecting the 2 subunits; these bridges are implicated in subunit movement. Contacts the tRNAs in the A and P-sites. The protein is Small ribosomal subunit protein uS13 of Rhizobium etli (strain ATCC 51251 / DSM 11541 / JCM 21823 / NBRC 15573 / CFN 42).